The chain runs to 1521 residues: Probable DNA topoisomerase 2 (1521 aa).

Positions 1–10 (MSDSENDYSD) are enriched in acidic residues. Residues 1-87 (MSDSENDYSD…DDKSSSSDNE (87 aa)) are disordered. The segment covering 36-48 (SKKKASATRKPAA) has biased composition (basic residues). The segment covering 49–62 (KKATTTTTSTTKKS) has biased composition (low complexity). ATP is bound by residues Asn-163, Asn-192, 220–222 (SSH), and 233–240 (GRNGFGAK). Positions 412 to 414 (NKK) are interaction with DNA. 446–448 (QTK) is a binding site for ATP. One can recognise a Toprim domain in the interval 527 to 640 (CTLILTEGDS…TLLRMPGFLV (114 aa)). The Mg(2+) site is built by Glu-533, Asp-609, and Asp-611. The 503-residue stretch at 771-1273 (IPNIVDGLKT…PIQEIYKRDL (503 aa)) folds into the Topo IIA-type catalytic domain. Tyr-861 serves as the catalytic O-(5'-phospho-DNA)-tyrosine intermediate. Residues 1007–1047 (GTRKKKKEEKEKKAASRKGTKAKPTTTKRSKRVDDDDDNEK) form a disordered region. Basic residues predominate over residues 1021-1037 (ASRKGTKAKPTTTKRSK). Residues 1085–1094 (KLVSTINETN) form an interaction with DNA region. 2 disordered regions span residues 1192–1222 (KIKK…EQDD) and 1335–1521 (IPTT…SDSD). A compositionally biased stretch (acidic residues) spans 1201–1222 (DEEDAAISSDEEKDGAQEEQDD). The span at 1354-1368 (TTSTSTSTTTSSNTK) shows a compositional bias: low complexity. Acidic residues predominate over residues 1422–1438 (LSDESDQESDQESDQGS). The segment covering 1454 to 1467 (PTTIATKKATTSKS) has biased composition (low complexity). A compositionally biased stretch (basic and acidic residues) spans 1468–1480 (KVIDDKSSDDEVI). Acidic residues predominate over residues 1503–1521 (SDSDDDDLYDNEESSSDSD).

This sequence belongs to the type II topoisomerase family. In terms of assembly, homodimer. Mg(2+) is required as a cofactor. Mn(2+) serves as cofactor. The cofactor is Ca(2+).

It localises to the nucleus. The catalysed reaction is ATP-dependent breakage, passage and rejoining of double-stranded DNA.. Control of topological states of DNA by transient breakage and subsequent rejoining of DNA strands. Topoisomerase II makes double-strand breaks. The chain is Probable DNA topoisomerase 2 (top2) from Dictyostelium discoideum (Social amoeba).